Reading from the N-terminus, the 664-residue chain is Alkaline/neutral invertase C, mitochondrial (664 aa).

Phosphoserine occurs at positions 41, 125, and 657.

Belongs to the glycosyl hydrolase 100 family. As to expression, expressed in seedlings, roots and flowers.

Its subcellular location is the mitochondrion. The enzyme catalyses Hydrolysis of terminal non-reducing beta-D-fructofuranoside residues in beta-D-fructofuranosides.. Mitochondrial invertase that cleaves sucrose into glucose and fructose and is involved in the regulation of aerial tissue development and floral transition. May be modulating hormone balance in relation to the radicle emergence. This is Alkaline/neutral invertase C, mitochondrial from Arabidopsis thaliana (Mouse-ear cress).